The sequence spans 149 residues: Large ribosomal subunit protein bL9 (149 aa).

It belongs to the bacterial ribosomal protein bL9 family.

In terms of biological role, binds to the 23S rRNA. The polypeptide is Large ribosomal subunit protein bL9 (Shewanella amazonensis (strain ATCC BAA-1098 / SB2B)).